Reading from the N-terminus, the 490-residue chain is Aspartyl/glutamyl-tRNA(Asn/Gln) amidotransferase subunit B (490 aa).

It belongs to the GatB/GatE family. GatB subfamily. As to quaternary structure, heterotrimer of A, B and C subunits.

It catalyses the reaction L-glutamyl-tRNA(Gln) + L-glutamine + ATP + H2O = L-glutaminyl-tRNA(Gln) + L-glutamate + ADP + phosphate + H(+). The enzyme catalyses L-aspartyl-tRNA(Asn) + L-glutamine + ATP + H2O = L-asparaginyl-tRNA(Asn) + L-glutamate + ADP + phosphate + 2 H(+). Its function is as follows. Allows the formation of correctly charged Asn-tRNA(Asn) or Gln-tRNA(Gln) through the transamidation of misacylated Asp-tRNA(Asn) or Glu-tRNA(Gln) in organisms which lack either or both of asparaginyl-tRNA or glutaminyl-tRNA synthetases. The reaction takes place in the presence of glutamine and ATP through an activated phospho-Asp-tRNA(Asn) or phospho-Glu-tRNA(Gln). This Synechococcus sp. (strain JA-2-3B'a(2-13)) (Cyanobacteria bacterium Yellowstone B-Prime) protein is Aspartyl/glutamyl-tRNA(Asn/Gln) amidotransferase subunit B.